The chain runs to 36 residues: Photosystem I reaction center subunit VIII (36 aa).

Residues 8-28 (SLFVPLVGLVFPAIAMASLFL) form a helical membrane-spanning segment.

Belongs to the PsaI family.

Its subcellular location is the plastid. It is found in the chloroplast thylakoid membrane. Functionally, may help in the organization of the PsaL subunit. In Brassica oleracea (Wild cabbage), this protein is Photosystem I reaction center subunit VIII.